Consider the following 111-residue polypeptide: Large ribosomal subunit protein uL22 (111 aa).

This sequence belongs to the universal ribosomal protein uL22 family. As to quaternary structure, part of the 50S ribosomal subunit.

This protein binds specifically to 23S rRNA; its binding is stimulated by other ribosomal proteins, e.g. L4, L17, and L20. It is important during the early stages of 50S assembly. It makes multiple contacts with different domains of the 23S rRNA in the assembled 50S subunit and ribosome. Functionally, the globular domain of the protein is located near the polypeptide exit tunnel on the outside of the subunit, while an extended beta-hairpin is found that lines the wall of the exit tunnel in the center of the 70S ribosome. In Clostridioides difficile (strain 630) (Peptoclostridium difficile), this protein is Large ribosomal subunit protein uL22.